Here is a 547-residue protein sequence, read N- to C-terminus: Ribosomal lysine N-methyltransferase set10 (547 aa).

Positions 17–235 (KSVEFIQSRD…KGNQLFNNYG (219 aa)) constitute an SET domain. Tyr234 lines the S-adenosyl-L-methionine pocket.

It belongs to the class V-like SAM-binding methyltransferase superfamily. RKM1 family.

The protein resides in the cytoplasm. Its subcellular location is the nucleus. In terms of biological role, S-adenosyl-L-methionine-dependent protein-lysine N-methyltransferase that methylates ribosomal protein L23 (rpl23a and rpl23b). This is Ribosomal lysine N-methyltransferase set10 (set10) from Schizosaccharomyces pombe (strain 972 / ATCC 24843) (Fission yeast).